A 379-amino-acid polypeptide reads, in one-letter code: Cytochrome b (379 aa).

4 helical membrane passes run 33 to 53 (FGSL…FLAM), 77 to 98 (WLIR…FIHV), 113 to 133 (WNIG…GYVL), and 178 to 198 (FFAF…VHLL). Heme b is bound by residues histidine 83 and histidine 97. The heme b site is built by histidine 182 and histidine 196. Position 201 (histidine 201) interacts with a ubiquinone. 4 helical membrane-spanning segments follow: residues 226–246 (IKDL…ALFF), 288–308 (LGGV…PLLN), 320–340 (ITQT…WIGG), and 347–367 (FTTI…IIMP).

This sequence belongs to the cytochrome b family. The cytochrome bc1 complex contains 11 subunits: 3 respiratory subunits (MT-CYB, CYC1 and UQCRFS1), 2 core proteins (UQCRC1 and UQCRC2) and 6 low-molecular weight proteins (UQCRH/QCR6, UQCRB/QCR7, UQCRQ/QCR8, UQCR10/QCR9, UQCR11/QCR10 and a cleavage product of UQCRFS1). This cytochrome bc1 complex then forms a dimer. Requires heme b as cofactor.

The protein localises to the mitochondrion inner membrane. In terms of biological role, component of the ubiquinol-cytochrome c reductase complex (complex III or cytochrome b-c1 complex) that is part of the mitochondrial respiratory chain. The b-c1 complex mediates electron transfer from ubiquinol to cytochrome c. Contributes to the generation of a proton gradient across the mitochondrial membrane that is then used for ATP synthesis. This Deltamys kempi (Kemp's grass mouse) protein is Cytochrome b (MT-CYB).